Here is a 691-residue protein sequence, read N- to C-terminus: DNA ligase (691 aa).

Residues 41–45, 90–91, and glutamate 130 contribute to the NAD(+) site; these read DAEYD and SL. Lysine 132 acts as the N6-AMP-lysine intermediate in catalysis. 4 residues coordinate NAD(+): arginine 153, glutamate 190, lysine 307, and lysine 331. 4 residues coordinate Zn(2+): cysteine 425, cysteine 428, cysteine 443, and cysteine 449. Residues 610-691 form the BRCT domain; it reads APQGVLAGKT…MHTLLEGHAR (82 aa).

This sequence belongs to the NAD-dependent DNA ligase family. LigA subfamily. The cofactor is Mg(2+). It depends on Mn(2+) as a cofactor.

It carries out the reaction NAD(+) + (deoxyribonucleotide)n-3'-hydroxyl + 5'-phospho-(deoxyribonucleotide)m = (deoxyribonucleotide)n+m + AMP + beta-nicotinamide D-nucleotide.. Functionally, DNA ligase that catalyzes the formation of phosphodiester linkages between 5'-phosphoryl and 3'-hydroxyl groups in double-stranded DNA using NAD as a coenzyme and as the energy source for the reaction. It is essential for DNA replication and repair of damaged DNA. The polypeptide is DNA ligase (Burkholderia pseudomallei (strain 668)).